The following is a 142-amino-acid chain: Transcriptional regulator MraZ (142 aa).

SpoVT-AbrB domains follow at residues 5-47 (NYQH…TNQE) and 76-119 (SLTV…DINA).

This sequence belongs to the MraZ family. Forms oligomers.

Its subcellular location is the cytoplasm. It is found in the nucleoid. The polypeptide is Transcriptional regulator MraZ (Mycoplasmoides gallisepticum (strain R(low / passage 15 / clone 2)) (Mycoplasma gallisepticum)).